The chain runs to 375 residues: D-apiose dehydrogenase (375 aa).

An NAD(+)-binding site is contributed by phenylalanine 29–phenylalanine 30. Mg(2+) is bound by residues tryptophan 38, arginine 39, isoleucine 41, and alanine 44. NAD(+) contacts are provided by residues aspartate 51, serine 93, glutamine 111–lysine 112, asparagine 140, and glutamine 179–tyrosine 181. Lysine 112 provides a ligand contact to substrate. The substrate site is built by glutamine 179, aspartate 192, histidine 196, and tyrosine 246.

Belongs to the Gfo/Idh/MocA family.

It carries out the reaction D-apiofuranose + NAD(+) = D-apionolactone + NADH + H(+). The protein operates within carbohydrate metabolism. In terms of biological role, involved in catabolism of D-apiose. Catalyzes oxidation of D-apiose to D-apionolactone. The chain is D-apiose dehydrogenase from Paraburkholderia graminis (strain ATCC 700544 / DSM 17151 / LMG 18924 / NCIMB 13744 / C4D1M).